Reading from the N-terminus, the 168-residue chain is DAZ-associated protein 2 (168 aa).

The span at 1-13 shows a compositional bias: low complexity; it reads MNSKGQYPTQPTY. Positions 1 to 25 are disordered; it reads MNSKGQYPTQPTYPVQPPGNPVYPQ. The PPAY motif lies at 39 to 42; sequence PPAY. Residue serine 77 is modified to Phosphoserine.

Interacts with SOX6. Interacts with DAZ1 and DAZL. Interacts with IL17RB. May interact with FAM168B. Interacts with INCA1. Interacts with EIF4G1 and EIF4G2. Interacts (via PPAY motif) with NEDD4 (via WW domains). Interacts with transcription factor TCF4; the interaction results in localization of DAZAP2 to the nucleus. Interacts with transcription factors TCF7 and TCF7L1. Interacts with transcription factor LEF1. Interacts with serine/threonine-protein kinase HIPK2; the interaction results in phosphorylation of DAZAP2 which causes localization of DAZAP2 to the nucleus, reduces interaction of DAZAP2 with HIPK2 and prevents DAZAP2-dependent degradation of HIPK2. Interacts with ubiquitin ligase SIAH1; the interaction is decreased following phosphorylation of DAZAP2 by HIPK2. Interacts with TP53; the interaction is triggered by DNA damage. Ubiquitinated by SMURF2, leading to proteasomal degradation. Ubiquitinated by NEDD4, leading to proteasomal degradation. In terms of processing, following DNA damage, phosphorylated by HIPK2 which promotes DAZAP2 localization to the nucleus, reduces interaction of DAZAP2 with HIPK2 and SIAH1, and prevents DAZAP2-dependent ubiquitination of HIPK2 by E3 ubiquitin-protein ligase SIAH1 and subsequent HIPK2 proteasomal degradation.

It is found in the cytoplasm. The protein resides in the nucleus. The protein localises to the nucleus speckle. It localises to the nuclear body. Its subcellular location is the stress granule. Functionally, in unstressed cells, promotes SIAH1-mediated polyubiquitination and degradation of the serine/threonine-protein kinase HIPK2, probably by acting as a loading factor that potentiates complex formation between HIPK2 and ubiquitin ligase SIAH1. In response to DNA damage, localizes to the nucleus following phosphorylation by HIPK2 and modulates the expression of a subset of TP53/p53 target genes by binding to TP53 at target gene promoters. This limits the expression of a number of cell death-mediating TP53 target genes, reducing DNA damage-induced cell death. Enhances the binding of transcription factor TCF7L2/TCF4, a Wnt signaling pathway effector, to the promoters of target genes. Plays a role in stress granule formation. The polypeptide is DAZ-associated protein 2 (Macaca fascicularis (Crab-eating macaque)).